Here is a 551-residue protein sequence, read N- to C-terminus: Cleavage and polyadenylation specificity factor subunit 6 (551 aa).

The tract at residues 1–213 is necessary for interaction with NXF1; that stretch reads MADGVDHIDI…RGRFPGAVPG (213 aa). One can recognise an RRM domain in the interval 81-161; sequence IALYIGNLTW…QNPVVTPCNK (81 aa). Residues 81–161 are necessary for interaction with NUDT21/CPSF5; it reads IALYIGNLTW…QNPVVTPCNK (81 aa). The necessary for nuclear paraspeckles localization stretch occupies residues 81–161; the sequence is IALYIGNLTW…QNPVVTPCNK (81 aa). Phosphothreonine is present on Thr157. Residues 169–180 are compositionally biased toward polar residues; it reads MQSRKTTQSGQM. Disordered regions lie at residues 169 to 411 and 477 to 551; these read MQSR…PLSE and LHGI…YRHR. The short motif at 202-206 is the GAR element; that stretch reads RGRGR. Residues 207–219 are compositionally biased toward low complexity; it reads FPGAVPGGDRFPG. Pro residues-rich tracts occupy residues 220–265, 285–366, and 377–388; these read PAGP…PLAG, GQPP…PPPT, and GPPPTDPYGRPP. Residues 389–404 are compositionally biased toward basic and acidic residues; sequence PYDRGDYGPPGREMDT. Residues Thr404 and Thr407 each carry the phosphothreonine modification. Positions 404–551 are sufficient for nuclear speckle localization; it reads TARTPLSEAE…RDREREYRHR (148 aa). Residues 405–551 form a necessary for RNA-binding region; sequence ARTPLSEAEF…RDREREYRHR (147 aa). The interval 481–551 is necessary for interaction with SRSF3, SRSF7 and TRA2B/SFRS10; that stretch reads ESKSYGSGSR…RDREREYRHR (71 aa). Over residues 489–503 the composition is skewed to basic and acidic residues; it reads SRRERSRERDHSRSR. The segment at 490–551 is arg/Ser-rich domain; sequence RRERSRERDH…RDREREYRHR (62 aa). Ser494, Ser500, Ser511, Ser513, and Ser525 each carry phosphoserine. Positions 504–514 are enriched in basic residues; that stretch reads EKSRRHKSRSR. The sufficient for nuclear targeting stretch occupies residues 510-551; the sequence is KSRSRDRHDDYYRERSRERERHRDRDRDRDRERDREREYRHR. A compositionally biased stretch (basic and acidic residues) spans 515-551; the sequence is DRHDDYYRERSRERERHRDRDRDRDRERDREREYRHR.

It belongs to the RRM CPSF6/7 family. In terms of assembly, component of the cleavage factor Im (CFIm) complex which is a heterotetramer composed of two subunits of NUDT21/CPSF5 and two subunits of CPSF6 or CPSF7 or a heterodimer of CPSF6 and CPSF7. The cleavage factor Im (CFIm) complex associates with the CPSF and CSTF complexes to promote the assembly of the core mRNA 3'-processing machinery. Associates with the exon junction complex (EJC). Associates with the 80S ribosome particle. Interacts (via the RRM domain) with NUDT21/CPSF5; this interaction is direct and enhances binding to RNA. Interacts (via Arg/Ser-rich domain) with FIP1L1 (preferentially via unphosphorylated form and Arg/Glu/Asp-rich domain); this interaction mediates, at least in part, the interaction between the CFIm and CPSF complexes and may be inhibited by CPSF6 hyper-phosphorylation. Interacts (via N-terminus) with NXF1; this interaction is direct. Interacts with SRSF3. Interacts with SRSF7. Interacts with SNRNP70. Interacts with TRA2B/SFRS10. Interacts with UPF1. Interacts with UPF3B. Interacts with VIRMA. Interacts (via Arg/Ser-rich domain) with TNPO3; promoting nuclear import of CPSF6 independently of its phosphorylation status. Interacts with YTHDC1. In terms of processing, phosphorylated. Phosphorylated in the Arg/Ser-rich domain by SRPK1, in vitro. Symmetrically dimethylated on arginine residues in the GAR motif by PRMT5 in a WDR77- and CLNS1A-dependent manner. Asymmetrically dimethylated on arginine residues in the GAR motif by PRMT1.

The protein localises to the nucleus. The protein resides in the nucleoplasm. Its subcellular location is the nucleus speckle. It localises to the cytoplasm. Its function is as follows. Component of the cleavage factor Im (CFIm) complex that functions as an activator of the pre-mRNA 3'-end cleavage and polyadenylation processing required for the maturation of pre-mRNA into functional mRNAs. CFIm contributes to the recruitment of multiprotein complexes on specific sequences on the pre-mRNA 3'-end, so called cleavage and polyadenylation signals (pA signals). Most pre-mRNAs contain multiple pA signals, resulting in alternative cleavage and polyadenylation (APA) producing mRNAs with variable 3'-end formation. The CFIm complex acts as a key regulator of cleavage and polyadenylation site choice during APA through its binding to 5'-UGUA-3' elements localized in the 3'-untranslated region (UTR) for a huge number of pre-mRNAs. CPSF6 enhances NUDT21/CPSF5 binding to 5'-UGUA-3' elements localized upstream of pA signals and promotes RNA looping, and hence activates directly the mRNA 3'-processing machinery. Plays a role in mRNA export. This Bos taurus (Bovine) protein is Cleavage and polyadenylation specificity factor subunit 6.